Reading from the N-terminus, the 124-residue chain is Large ribosomal subunit protein eL31 (124 aa).

Belongs to the eukaryotic ribosomal protein eL31 family.

The sequence is that of Large ribosomal subunit protein eL31 (RpL31) from Spodoptera frugiperda (Fall armyworm).